The following is a 429-amino-acid chain: Histidine--tRNA ligase (429 aa).

It belongs to the class-II aminoacyl-tRNA synthetase family. As to quaternary structure, homodimer.

It is found in the cytoplasm. The catalysed reaction is tRNA(His) + L-histidine + ATP = L-histidyl-tRNA(His) + AMP + diphosphate + H(+). This chain is Histidine--tRNA ligase, found in Oceanobacillus iheyensis (strain DSM 14371 / CIP 107618 / JCM 11309 / KCTC 3954 / HTE831).